A 664-amino-acid polypeptide reads, in one-letter code: Glycine--tRNA ligase beta subunit (664 aa).

It belongs to the class-II aminoacyl-tRNA synthetase family. Tetramer of two alpha and two beta subunits.

The protein resides in the cytoplasm. It catalyses the reaction tRNA(Gly) + glycine + ATP = glycyl-tRNA(Gly) + AMP + diphosphate. This Rickettsia typhi (strain ATCC VR-144 / Wilmington) protein is Glycine--tRNA ligase beta subunit.